Here is a 161-residue protein sequence, read N- to C-terminus: MKFFAVLALCIVGAIASPLTADEASLVQSSWKAVSHNEVEILAAVFAAYPDIQNKFSQFAGKDLASIKDTGAFATHATRIVSFLSEVIALSGNDSNAAAVNSLVSKLGDDHKARGVSAAQFGEFRTALVAYLQANVSWGDNVAAAWNKALDNTFAIVVPRL.

An N-terminal signal peptide occupies residues 1–16 (MKFFAVLALCIVGAIA). Residues 18-161 (PLTADEASLV…NTFAIVVPRL (144 aa)) enclose the Globin domain. 2 residues coordinate heme b: histidine 76 and histidine 111.

It belongs to the globin family. Homodimer.

The polypeptide is Globin CTT-VIIB-6 (CTT-7B6) (Chironomus thummi thummi (Midge)).